The primary structure comprises 300 residues: Bifunctional protein FolD 2 (300 aa).

Residues 165–167 (GRS), serine 190, and isoleucine 231 contribute to the NADP(+) site.

It belongs to the tetrahydrofolate dehydrogenase/cyclohydrolase family. Homodimer.

The catalysed reaction is (6R)-5,10-methylene-5,6,7,8-tetrahydrofolate + NADP(+) = (6R)-5,10-methenyltetrahydrofolate + NADPH. It catalyses the reaction (6R)-5,10-methenyltetrahydrofolate + H2O = (6R)-10-formyltetrahydrofolate + H(+). It functions in the pathway one-carbon metabolism; tetrahydrofolate interconversion. Functionally, catalyzes the oxidation of 5,10-methylenetetrahydrofolate to 5,10-methenyltetrahydrofolate and then the hydrolysis of 5,10-methenyltetrahydrofolate to 10-formyltetrahydrofolate. The chain is Bifunctional protein FolD 2 from Pseudomonas syringae pv. syringae (strain B728a).